An 811-amino-acid polypeptide reads, in one-letter code: Protein kinase C-binding protein NELL2a (811 aa).

The signal sequence occupies residues 1–18 (MAFLQLFVGLLCGAAVSA). Residues 54-225 (AFMFQGSSRS…TQCPDLNRTC (172 aa)) form the Laminin G-like domain. 3 N-linked (GlcNAc...) asparagine glycosylation sites follow: asparagine 222, asparagine 290, and asparagine 295. Residues 269 to 328 (RTCRVKDQIYREEQSWTDGCKNCTCSNGTVRCEKILCPPLDCPDGTTPAYVTGTCCKECQ) enclose the VWFC 1 domain. The 43-residue stretch at 395–437 (GHDFCAEENICSENSDCVNLDAGASCGCKNGFRPLRLDSAYCE) folds into the EGF-like 1 domain. Cystine bridges form between cysteine 399/cysteine 411, cysteine 405/cysteine 420, and cysteine 422/cysteine 436. Aspartate 438, isoleucine 439, and glutamate 441 together coordinate Ca(2+). The EGF-like 2; calcium-binding domain maps to 438 to 479 (DIDECAEGRHYCRENTECVNTAGSFMCVCHTGFIRIDDYSCT). 9 disulfide bridges follow: cysteine 442/cysteine 455, cysteine 449/cysteine 464, cysteine 466/cysteine 478, cysteine 484/cysteine 497, cysteine 491/cysteine 506, cysteine 508/cysteine 519, cysteine 523/cysteine 533, cysteine 527/cysteine 539, and cysteine 541/cysteine 550. Residues asparagine 457, threonine 458, and serine 461 each coordinate Ca(2+). The EGF-like 3; calcium-binding domain maps to 480 to 520 (EHDECASGQHDCDENALCFNTVGGHSCSCKPGYSGNGTVCR). Asparagine 515 is a glycosylation site (N-linked (GlcNAc...) asparagine). The EGF-like 4 domain occupies 521–551 (ALCDGRCLNGGSCASPNVCVCVQGFSGQNCE). Ca(2+) contacts are provided by aspartate 553, isoleucine 554, and glutamate 556. In terms of domain architecture, EGF-like 5; calcium-binding spans 553–592 (DIDECSEGLVQCAAHATCVNLPGWYHCECRDGYHDNEVFS). 3 disulfides stabilise this stretch: cysteine 557/cysteine 570, cysteine 564/cysteine 579, and cysteine 581/cysteine 598. Asparagine 572, leucine 573, and tryptophan 576 together coordinate Ca(2+). Residues aspartate 600, isoleucine 601, and glutamate 603 each coordinate Ca(2+). One can recognise an EGF-like 6; calcium-binding domain in the interval 600–635 (DIDECRTGRSTCANDTVCFNLDGGFDCRCPHGHNCS). 3 disulfides stabilise this stretch: cysteine 604-cysteine 617, cysteine 611-cysteine 626, and cysteine 628-cysteine 634. Asparagine 613 is a glycosylation site (N-linked (GlcNAc...) asparagine). Ca(2+) is bound by residues asparagine 619, leucine 620, and glycine 623. Asparagine 633 carries N-linked (GlcNAc...) asparagine glycosylation. VWFC domains follow at residues 636–691 (GDCI…PECD) and 696–754 (SQCL…PRCV).

As to quaternary structure, homotrimer.

It is found in the secreted. In terms of biological role, may regulate neuronal differentiation, polarization and axon guidance. In Danio rerio (Zebrafish), this protein is Protein kinase C-binding protein NELL2a (nell2a).